Consider the following 262-residue polypeptide: ClpXP adapter protein SpxH (262 aa).

It belongs to the SpxH family. Interacts with Spx.

The protein localises to the cytoplasm. Functionally, adapter protein required for efficient degradation of Spx by ClpXP under non-stress conditions. Interaction with Spx stabilizes Spx and exposes the C-terminus of Spx for recognition and proteolysis by ClpXP. In Staphylococcus saprophyticus subsp. saprophyticus (strain ATCC 15305 / DSM 20229 / NCIMB 8711 / NCTC 7292 / S-41), this protein is ClpXP adapter protein SpxH.